Consider the following 339-residue polypeptide: Anthranilate phosphoribosyltransferase (339 aa).

5-phospho-alpha-D-ribose 1-diphosphate-binding positions include Gly-82, 85–86 (GD), Thr-90, 92–95 (NIST), 110–118 (KHGNRSASG), and Ser-122. Gly-82 serves as a coordination point for anthranilate. Ser-94 contacts Mg(2+). Position 113 (Asn-113) interacts with anthranilate. Arg-168 is a binding site for anthranilate. Residues Asp-226 and Glu-227 each coordinate Mg(2+).

This sequence belongs to the anthranilate phosphoribosyltransferase family. As to quaternary structure, homodimer. Requires Mg(2+) as cofactor.

The enzyme catalyses N-(5-phospho-beta-D-ribosyl)anthranilate + diphosphate = 5-phospho-alpha-D-ribose 1-diphosphate + anthranilate. Its pathway is amino-acid biosynthesis; L-tryptophan biosynthesis; L-tryptophan from chorismate: step 2/5. Functionally, catalyzes the transfer of the phosphoribosyl group of 5-phosphorylribose-1-pyrophosphate (PRPP) to anthranilate to yield N-(5'-phosphoribosyl)-anthranilate (PRA). In Methanosphaerula palustris (strain ATCC BAA-1556 / DSM 19958 / E1-9c), this protein is Anthranilate phosphoribosyltransferase.